Here is a 917-residue protein sequence, read N- to C-terminus: Protein translocase subunit SecA (917 aa).

Residues Q87, 105-109, and D501 each bind ATP; that span reads GEGKT. Zn(2+) contacts are provided by C901, C903, C912, and H913.

The protein belongs to the SecA family. In terms of assembly, monomer and homodimer. Part of the essential Sec protein translocation apparatus which comprises SecA, SecYEG and auxiliary proteins SecDF-YajC and YidC. Zn(2+) is required as a cofactor.

The protein resides in the cell inner membrane. It localises to the cytoplasm. It catalyses the reaction ATP + H2O + cellular proteinSide 1 = ADP + phosphate + cellular proteinSide 2.. Part of the Sec protein translocase complex. Interacts with the SecYEG preprotein conducting channel. Has a central role in coupling the hydrolysis of ATP to the transfer of proteins into and across the cell membrane, serving both as a receptor for the preprotein-SecB complex and as an ATP-driven molecular motor driving the stepwise translocation of polypeptide chains across the membrane. This Granulibacter bethesdensis (strain ATCC BAA-1260 / CGDNIH1) protein is Protein translocase subunit SecA.